We begin with the raw amino-acid sequence, 229 residues long: Putative N-acetylmannosamine-6-phosphate 2-epimerase (229 aa).

Belongs to the NanE family.

The catalysed reaction is an N-acyl-D-glucosamine 6-phosphate = an N-acyl-D-mannosamine 6-phosphate. It functions in the pathway amino-sugar metabolism; N-acetylneuraminate degradation; D-fructose 6-phosphate from N-acetylneuraminate: step 3/5. Converts N-acetylmannosamine-6-phosphate (ManNAc-6-P) to N-acetylglucosamine-6-phosphate (GlcNAc-6-P). The sequence is that of Putative N-acetylmannosamine-6-phosphate 2-epimerase from Actinobacillus pleuropneumoniae serotype 3 (strain JL03).